Here is a 698-residue protein sequence, read N- to C-terminus: MARKTPIERYRNIGISAHIDAGKTTTTERILYYTGVNHKIGEVHDGAATMDWMAQEQERGITITSAATTCFWKGMDLNFPEHRFNIIDTPGHVDFTIEVERSMRVLDGACMVYCAVGGVQPQSETVWRQATKYKVPRLAFVNKMDRSGANFYKVVDQMKMRLKANPVPIVLPIGAEEGFKGVVDLIKMKAIIWDEASQGMKFEYQDIPAELQGDAETWREQMVEAAAEANEDLMNEYLENGDLSEEKIKLGLRTRTIACEIQPMLCGTAFKNKGVQRMLDAVIEFLPSPVDIPPVAGVDDNEKEVTRKADDKEKFAALAFKLMTDPFVGQLTFVRVYSGVLNSGETVLNSVKNKKERIGRILQMHANEREEIKEVLAGDIAACVGLKEVTTGETLCDPSAPIILERMVFPDPVIHVAVEPKTKGDQEKMGIALGRLAAEDPSFRVRTDEESGQTIISGMGELHLEIIVDRMKREFNVEANVGAPQVAYREAIRKAVEQEGKFVKQSGGRGQYGHVWIKLEPNETGKGYEFVDAIKGGVVPREYIPAVDKGLQETLPNGVLAGFPVVDVKVTLFDGSYHDVDSNENAFKMAASMAFKDAMRKANPILLEPMMAVVVETPEDYMGNVMGDLSGRRGIVQGMDDLPGGMKEIKAEVPLAEMFGYATQLRSLTQGRATYSMEFKHYSEAPKSVAEAVISNRK.

Residues 8-290 (ERYRNIGISA…AVIEFLPSPV (283 aa)) form the tr-type G domain. GTP is bound by residues 17 to 24 (AHIDAGKT), 88 to 92 (DTPGH), and 142 to 145 (NKMD).

It belongs to the TRAFAC class translation factor GTPase superfamily. Classic translation factor GTPase family. EF-G/EF-2 subfamily.

It localises to the cytoplasm. Catalyzes the GTP-dependent ribosomal translocation step during translation elongation. During this step, the ribosome changes from the pre-translocational (PRE) to the post-translocational (POST) state as the newly formed A-site-bound peptidyl-tRNA and P-site-bound deacylated tRNA move to the P and E sites, respectively. Catalyzes the coordinated movement of the two tRNA molecules, the mRNA and conformational changes in the ribosome. In Azoarcus sp. (strain BH72), this protein is Elongation factor G.